Reading from the N-terminus, the 431-residue chain is Hydroxylamine reductase (431 aa).

[4Fe-4S] cluster is bound by residues C5, C8, C17, and C23. H131, E155, C199, C286, C314, C339, E373, and K375 together coordinate hybrid [4Fe-2O-2S] cluster. Position 286 is a cysteine persulfide (C286).

This sequence belongs to the HCP family. The cofactor is [4Fe-4S] cluster. Requires hybrid [4Fe-2O-2S] cluster as cofactor.

It is found in the cytoplasm. The enzyme catalyses A + NH4(+) + H2O = hydroxylamine + AH2 + H(+). Its function is as follows. Catalyzes the reduction of hydroxylamine to form NH(3) and H(2)O. This chain is Hydroxylamine reductase, found in Thermotoga maritima (strain ATCC 43589 / DSM 3109 / JCM 10099 / NBRC 100826 / MSB8).